Reading from the N-terminus, the 290-residue chain is Aquaporin PIP2-1 (290 aa).

The tract at residues 1-20 (MGKDDVIESGAGGGEFAAKD) is disordered. A run of 2 helical transmembrane segments spans residues 43–63 (AVIAEFIATLLFLYITVATVI) and 80–100 (CGGVGVLGIAWAFGGMIFVLV). Positions 112-114 (NPA) match the NPA 1 motif. 3 helical membrane-spanning segments follow: residues 131–151 (LLYIVAQCLGAICGVGLVKAF), 173–193 (GTGLGAEIIGTFVLVYTVFSA), and 205–225 (VPVLAPLPIGFAVFMVHLATI). The NPA 2 motif lies at 233–235 (NPA). The helical transmembrane segment at 255–275 (IFWVGPLVGAAIAAFYHQYIL) threads the bilayer.

It belongs to the MIP/aquaporin (TC 1.A.8) family. PIP (TC 1.A.8.11) subfamily. In terms of assembly, homomers. Can interact with PIP1-2 to form heteromers. As to expression, expressed in roots.

Its subcellular location is the cell membrane. Water channel required to facilitate the transport of water across cell membrane. Active as homomers. Increased activity when heteromerization with PIP1-2. The chain is Aquaporin PIP2-1 (PIP2-1) from Zea mays (Maize).